The sequence spans 268 residues: Trans-aconitate 2-methyltransferase (268 aa).

The protein belongs to the methyltransferase superfamily. Tam family.

Its subcellular location is the cytoplasm. It catalyses the reaction trans-aconitate + S-adenosyl-L-methionine = (E)-3-(methoxycarbonyl)pent-2-enedioate + S-adenosyl-L-homocysteine. In terms of biological role, catalyzes the S-adenosylmethionine monomethyl esterification of trans-aconitate. This is Trans-aconitate 2-methyltransferase from Delftia acidovorans (strain DSM 14801 / SPH-1).